The following is a 65-amino-acid chain: Large ribosomal subunit protein bL35 (65 aa).

Residues 1 to 52 (MPKMKSNRAAAKRFKRTANGGFKSGNSFTSHRFHGKTKKQRRQLRGLSMMDK) form a disordered region. Basic residues predominate over residues 31 to 44 (HRFHGKTKKQRRQL).

The protein belongs to the bacterial ribosomal protein bL35 family.

The sequence is that of Large ribosomal subunit protein bL35 from Limosilactobacillus reuteri (strain DSM 20016) (Lactobacillus reuteri).